A 40-amino-acid polypeptide reads, in one-letter code: GWIRDFGKRIERVGQHTRDATIQTIAVAQQAANVAATLKG.

Belongs to the cecropin family.

It is found in the secreted. Its function is as follows. Sarcotoxins, which are potent bactericidal proteins, are produced in response to injury. They are cytotoxic to both Gram-positive and Gram-negative bacteria. The chain is Sarcotoxin-1D from Sarcophaga peregrina (Flesh fly).